Reading from the N-terminus, the 605-residue chain is Heparan-sulfate 6-O-sulfotransferase 2 (605 aa).

The Cytoplasmic portion of the chain corresponds to 1 to 4 (MALP). The interval 1–66 (MALPACAVRE…GVSHGFHTRP (66 aa)) is disordered. Residues 5-27 (ACAVREFEPPRQPERGAPVRTTC) form a helical; Signal-anchor for type II membrane protein membrane-spanning segment. The segment covering 9–18 (REFEPPRQPE) has biased composition (basic and acidic residues). Over 28-605 (PRRHSRVEAE…DYIGSVEKWR (578 aa)) the chain is Lumenal. Asn-209 carries an N-linked (GlcNAc...) asparagine glycan. 233 to 241 (HIQKTGGTT) contacts 3'-phosphoadenylyl sulfate. Residues 263–264 (KK), Arg-280, Trp-285, and His-290 contribute to the substrate site. His-290 serves as the catalytic Proton acceptor. Arg-325 and Ser-333 together coordinate 3'-phosphoadenylyl sulfate. 2 residues coordinate substrate: His-337 and Trp-344. The N-linked (GlcNAc...) asparagine glycan is linked to Asn-404. 457 to 459 (TQY) provides a ligand contact to 3'-phosphoadenylyl sulfate. Asn-460 carries N-linked (GlcNAc...) asparagine glycosylation. A 3'-phosphoadenylyl sulfate-binding site is contributed by 463–464 (RA). The tract at residues 530-605 (FQSQGQGQSQ…DYIGSVEKWR (76 aa)) is disordered. Residues 531–571 (QSQGQGQSQNPNQNQSQNPNPNANQNLTQNLMQNLTQSLSQ) show a composition bias toward low complexity. Asn-544, Asn-556, Asn-564, Asn-589, and Asn-592 each carry an N-linked (GlcNAc...) asparagine glycan. Residues 579-597 (KQNSGKEQNDNTSNGTNDY) show a composition bias toward polar residues.

It belongs to the sulfotransferase 6 family.

Its subcellular location is the membrane. The catalysed reaction is alpha-D-glucosaminyl-[heparan sulfate](n) + 3'-phosphoadenylyl sulfate = 6-sulfo-alpha-D-glucosaminyl-[heparan sulfate](n) + adenosine 3',5'-bisphosphate + H(+). Functionally, 6-O-sulfation enzyme which catalyzes the transfer of sulfate from 3'-phosphoadenosine 5'-phosphosulfate (PAPS) to position 6 of the N-sulfoglucosamine residue (GlcNS) of heparan sulfate. This is Heparan-sulfate 6-O-sulfotransferase 2 from Homo sapiens (Human).